The chain runs to 1091 residues: Protein diaphanous (1091 aa).

Positions 1 to 37 (MSRHEKTKSTGGGLLDSLFGRPSKSKGGTISSGTLAH) are disordered. A basic region region spans residues 1–56 (MSRHEKTKSTGGGLLDSLFGRPSKSKGGTISSGTLAHGGRPVSADNYVVPGVEDFE). Positions 25–34 (SKGGTISSGT) are enriched in low complexity. The region spanning 59 to 431 (IQQLSVAELD…QIVFHKGYCD (373 aa)) is the GBD/FH3 domain. Residues 455-496 (KAKESKRSEEYEKKIEQLESAKQEAEAKAAHLEEKVKLMEAN) are a coiled coil. 3 disordered regions span residues 499-589 (AAPS…MMMG), 994-1021 (RLQEAREQSAREQQERQQRKKAVVDMDA), and 1039-1072 (GSAFGQRNRQARRQRPAGAERRAQLSRSRSRTRV). Pro residues predominate over residues 512–572 (PMPPPPPGGG…MGGPPPPPMP (61 aa)). One can recognise an FH1 domain in the interval 512-596 (PMPPPPPGGG…MMGPMVPVLP (85 aa)). Positions 601-1001 (PKKKWDVKNP…KRRLQEAREQ (401 aa)) constitute an FH2 domain. Positions 994-1010 (RLQEAREQSAREQQERQ) are enriched in basic and acidic residues. Positions 1022-1054 (PQTQEGVMDSLLEALQTGSAFGQRNRQARRQRP) constitute a DAD domain.

This sequence belongs to the formin homology family. Diaphanous subfamily. May interact (via CBD/FH3 domain) with Rho1.

It is found in the cytoplasm. The protein resides in the cytoskeleton. Its subcellular location is the cleavage furrow. The protein localises to the apical cell membrane. Its function is as follows. Required for cytokinesis in both mitosis and meiosis. Has a role in actin cytoskeleton organization and is essential for many, if not all, actin-mediated events involving membrane invagination. May serve as a mediator between signaling molecules and actin organizers at specific phases of the cell cycle. Possible component of the contractile ring or may control its function. The chain is Protein diaphanous (dia) from Drosophila melanogaster (Fruit fly).